Here is a 400-residue protein sequence, read N- to C-terminus: TBC1 domain family member 13 (400 aa).

The Rab-GAP TBC domain occupies 35–345 (PCEGGLRCLC…RIWDSLFADD (311 aa)).

Interacts with RAB1A and RAB10; in a GTP-dependent manner.

It localises to the membrane. It is found in the cytoplasm. Its function is as follows. Acts as a GTPase-activating protein for RAB35. Together with RAB35 may be involved in regulation of insulin-induced glucose transporter SLC2A4/GLUT4 translocation to the plasma membrane in adipocytes. This is TBC1 domain family member 13 (TBC1D13) from Homo sapiens (Human).